Consider the following 555-residue polypeptide: Glutamine--tRNA ligase (555 aa).

Positions 34-44 (PEPNGYLHIGH) match the 'HIGH' region motif. ATP-binding positions include 35-37 (EPN) and 41-47 (HIGHAKS). The L-glutamine site is built by Asp67 and Tyr212. ATP contacts are provided by residues Thr231, 261–262 (RL), and 269–271 (MSK). Positions 268–272 (IMSKR) match the 'KMSKS' region motif.

This sequence belongs to the class-I aminoacyl-tRNA synthetase family. Monomer.

It localises to the cytoplasm. The catalysed reaction is tRNA(Gln) + L-glutamine + ATP = L-glutaminyl-tRNA(Gln) + AMP + diphosphate. In Yersinia enterocolitica serotype O:8 / biotype 1B (strain NCTC 13174 / 8081), this protein is Glutamine--tRNA ligase.